The following is a 297-amino-acid chain: Cbb3-type cytochrome c oxidase subunit CcoP (297 aa).

At 1-35 (MSKKPTTKKEVQTTGHSWDGIEELNTPLPRWWLWT) the chain is on the cytoplasmic side. Residues 36–56 (FYATIVWGVAYSIAMPAWPIF) form a helical membrane-spanning segment. At 57–297 (ASGATPGILG…SYVHSLGGGQ (241 aa)) the chain is on the periplasmic side. 2 consecutive Cytochrome c domains span residues 108–199 (YTRN…LKIS) and 206–294 (ARAT…HSLG). Residues Cys121, Cys124, His125, Met174, Cys219, Cys222, His223, and Met264 each coordinate heme c.

It belongs to the CcoP / FixP family. In terms of assembly, component of the cbb3-type cytochrome c oxidase at least composed of CcoN, CcoO, CcoQ and CcoP. Interacts with CcoH (via transmembrane domain). Heme c is required as a cofactor.

Its subcellular location is the cell inner membrane. The protein operates within energy metabolism; oxidative phosphorylation. Its function is as follows. C-type cytochrome. Part of the cbb3-type cytochrome c oxidase complex. CcoP subunit is required for transferring electrons from donor cytochrome c via its heme groups to CcoO subunit. From there, electrons are shuttled to the catalytic binuclear center of CcoN subunit where oxygen reduction takes place. The complex also functions as a proton pump. This is Cbb3-type cytochrome c oxidase subunit CcoP from Rhodobacter capsulatus (strain ATCC BAA-309 / NBRC 16581 / SB1003).